The chain runs to 195 residues: Pyridoxal 5'-phosphate synthase subunit PdxT (195 aa).

46-48 (GES) is an L-glutamine binding site. The active-site Nucleophile is the cysteine 78. Residues arginine 107 and 136 to 137 (IR) contribute to the L-glutamine site. Residues histidine 173 and glutamate 175 each act as charge relay system in the active site.

Belongs to the glutaminase PdxT/SNO family. In terms of assembly, in the presence of PdxS, forms a dodecamer of heterodimers. Only shows activity in the heterodimer.

The catalysed reaction is aldehydo-D-ribose 5-phosphate + D-glyceraldehyde 3-phosphate + L-glutamine = pyridoxal 5'-phosphate + L-glutamate + phosphate + 3 H2O + H(+). The enzyme catalyses L-glutamine + H2O = L-glutamate + NH4(+). It functions in the pathway cofactor biosynthesis; pyridoxal 5'-phosphate biosynthesis. In terms of biological role, catalyzes the hydrolysis of glutamine to glutamate and ammonia as part of the biosynthesis of pyridoxal 5'-phosphate. The resulting ammonia molecule is channeled to the active site of PdxS. The chain is Pyridoxal 5'-phosphate synthase subunit PdxT from Dehalococcoides mccartyi (strain ATCC BAA-2100 / JCM 16839 / KCTC 5957 / BAV1).